We begin with the raw amino-acid sequence, 646 residues long: DEAD-box ATP-dependent RNA helicase 52 (646 aa).

Disordered stretches follow at residues 1-64 (MSSN…ANSG) and 76-117 (GSGY…PAVN). Residue Ser2 is modified to N-acetylserine. 2 stretches are compositionally biased toward gly residues: residues 54–64 (DRGGYGGANSG) and 76–87 (GSGYGGRGGPVG). A Q motif motif is present at residues 146–174 (NTFAEIDLGEALNLNIQRCKYVKPTPVQR). In terms of domain architecture, Helicase ATP-binding spans 177–361 (IPILAAGRDL…SDFLSNYIFL (185 aa)). 190 to 197 (AQTGSGKT) is a binding site for ATP. The DEAD box signature appears at 305–308 (DEAD). The Helicase C-terminal domain maps to 388-539 (HLMDLLHAQR…EVPDWLTRYA (152 aa)).

Belongs to the DEAD box helicase family. DDX3/DED1 subfamily.

It carries out the reaction ATP + H2O = ADP + phosphate + H(+). The polypeptide is DEAD-box ATP-dependent RNA helicase 52 (RH52) (Arabidopsis thaliana (Mouse-ear cress)).